The primary structure comprises 277 residues: Thymidylate synthase (277 aa).

DUMP-binding positions include R27 and 132–133; that span reads RR. C152 (nucleophile) is an active-site residue. DUMP is bound by residues 179-182, N190, and 220-222; these read RSAD and HVY. (6R)-5,10-methylene-5,6,7,8-tetrahydrofolate is bound at residue D182. Residue A276 coordinates (6R)-5,10-methylene-5,6,7,8-tetrahydrofolate.

Belongs to the thymidylate synthase family. Bacterial-type ThyA subfamily. In terms of assembly, homodimer.

It is found in the cytoplasm. It catalyses the reaction dUMP + (6R)-5,10-methylene-5,6,7,8-tetrahydrofolate = 7,8-dihydrofolate + dTMP. The protein operates within pyrimidine metabolism; dTTP biosynthesis. In terms of biological role, catalyzes the reductive methylation of 2'-deoxyuridine-5'-monophosphate (dUMP) to 2'-deoxythymidine-5'-monophosphate (dTMP) while utilizing 5,10-methylenetetrahydrofolate (mTHF) as the methyl donor and reductant in the reaction, yielding dihydrofolate (DHF) as a by-product. This enzymatic reaction provides an intracellular de novo source of dTMP, an essential precursor for DNA biosynthesis. The polypeptide is Thymidylate synthase (Albidiferax ferrireducens (strain ATCC BAA-621 / DSM 15236 / T118) (Rhodoferax ferrireducens)).